The chain runs to 1828 residues: MPIDSSSILGIISEEDVIRAAISTSATKFGSQLHSTVCDHVKETYLDAVERQKVKKKIDVRRDLSQEQLQLLNDLYPERHIVSSNCERGTHSFAAASRKIETDLLLSRIPKRSWVYDIGGNWATHVKRNDGRKVHCCCPTVDIRDSARKTVRWASIEKYLDEKEEIPPEIGERIKRLQADEDRIYANLKSEKAQPEDLDGKWYCGNRFEDCVFRADRAYAMAIHSIYDIDLSDLANALEEKRIKVMSGTFLFSVDLLLGKKSGTLPTMDGFFEVEDGYVKYGFHNDTNPGYKHNLNQLMKYLTKTFVVAKGGTIYYLELTEQRGDVMFFTMTDATEARMNGVVADESFKCIPIDNKDEVVFPIFEVDQKTDALVFSEILLSRDFVQRAIEYTGRLKPAQLTSDNVNTYLTSTNNTIIIGGSSKKNATKVDATLIQQITTTLIVWTELMNQRQKRVLEKLRMQMKDDVDFMTLAHATFLKMFGKVSYYQRALRCFANWISYVHGADAIQFRNVPLYAEVTDRIKLWKNYAPNQGFVLDLEELDVKIKLHEITEREKRDVSRCIVSGKLGELSSVDNTECGAVLDGKDYKDSRRKTTFEDLLDGEVATNFLDNWCDKTDHFNFSRSDAVSKYAWGMKLLKGVWEFLLPPLHFAPVYVDAEQARIRLNAEIVTVVEHAVTESNVGLTGVEKAEFADAMSFLVGAAKHLEKRKEVAQQAVVEAVEAVRELRKVHSPADVCNAVDLWSAFEKDLDDDDETGTTATIVEKGKAVCDDDVQVVLCGSSSTSSVEEVSKEAELFVETIESQASSVTETSDVTTEVAASSSDESVMSEVPEKSWASVAEDESDDSYYLRSMIISDKVQKSALPKRPDFSKYSTLQQKAKQEALWYLQCKIVSDRTTLRSIIDDHLRGMFHNGNCELPKDSAFLDYTVDNCGTWMYGKPSRPGHSYGVGFSLDTKQRITKCELVKLMWNRDCRGQMNQKPVNTRAFQYLLLSDLSFMMNELVIYRNLQQVVKKKERTKQARITLRDGVPGCGKSTWILNNANPMKDMVLCVGKEATEDLKEKFMKKHKCAESDLKRIRTVDSFLMHDYDKFRAATVHFDEALMAHAGIVYFCADILGAKKVICQGDSQQIPFINRVESITLQYAKLAIDETEYVRLTYRSPVDVAHYLTKKSWYSGGRVTTKNSVLRSMKVVGPRDAKPMTSVHCVPYHRDAQYLTFTQSEKADLYKALRAKGPVEVNTVHETQGKTFDDVIVVRLKTTENEIYPGGRKGQPYEIVATTRHRRSLVYYTAIEDRLFEDISDMQDVMESKLMKNLCSELTKXRFGSKYESILICDREVRVPDVGTPVIIQDFYDRVLPGNSTMDSHFDGYEVSTSDISIELENCTVQPNKNVKVWQDKRGLVPVLRTAMPPKRQNLPVEAMLALKKRNMAAPKLQEAVNEFEVIERTVNRAKEIFFDTSLIDDSEVSTRESNLRWWKRQSTTAKAQLKKETRLLHELDLCYYNYCIKGDEKPKMDRSPQHEYGALQTVVFPDKIVNALFGPAMKEINERIRLALKPHVVYNSRMNAEELNRTVEFLDPEEDFNAFEIDFSKFDKSKTSLHIRAVIELYKLFGLNDLFALLWEKSQCQTKIRDFVNGITAYLLYQQKSGNCDTYGSNTWSAALALLESMPLEKAKFMIFGGDDSLILFPKHLTIEDPCRRLASLWNFDCKLFDFKHNMFCGKFLLKVGDRFKFAPDPMKLITKLGRKDIVDGRLLSEIFVSVGDNYRSYRDYRILEQLTYALRERYRTTEDPTAALVALKKYIFDFKLWASMFNYKGEFVECRVDRNFEW.

Residues 61-812 (RRDLSQEQLQ…QASSVTETSD (752 aa)) are methyltransferase. One can recognise an Alphavirus-like MT domain in the interval 82-302 (VSSNCERGTH…HNLNQLMKYL (221 aa)). Residues 701–728 (AAKHLEKRKEVAQQAVVEAVEAVRELRK) adopt a coiled-coil conformation. The 159-residue stretch at 996–1154 (FMMNELVIYR…KLAIDETEYV (159 aa)) folds into the (+)RNA virus helicase ATP-binding domain. The helicase stretch occupies residues 1026–1289 (DGVPGCGKST…RHRRSLVYYT (264 aa)). The region spanning 1155–1320 (RLTYRSPVDV…MKNLCSELTK (166 aa)) is the (+)RNA virus helicase C-terminal domain. The stretch at 1432–1496 (KLQEAVNEFE…KKETRLLHEL (65 aa)) forms a coiled coil. A RdRp catalytic domain is found at 1581 to 1694 (FNAFEIDFSK…LFPKHLTIED (114 aa)).

Belongs to the ssRNA positive-strand viruses RNA-directed RNA polymerase family. Heterodimer of a large and a small subunit.

It catalyses the reaction RNA(n) + a ribonucleoside 5'-triphosphate = RNA(n+1) + diphosphate. It carries out the reaction ATP + H2O = ADP + phosphate + H(+). Is an RNA-dependent RNA polymerase active in viral RNA replication. Functionally, is a methyltransferase active in RNA capping and an RNA helicase. Methyltransferase displays a cytoplasmic capping enzyme activity. This function is necessary since all viral RNAs are synthesized in the cytoplasm, and host capping enzymes are restricted to the nucleus. Helicase region probably exhibits NTPase and RNA unwinding activities (Potential). The protein is Replicase large subunit (rep) of Hordeum vulgare (Barley).